The following is a 255-amino-acid chain: Small ribosomal subunit protein uS2 (255 aa).

The protein belongs to the universal ribosomal protein uS2 family.

The polypeptide is Small ribosomal subunit protein uS2 (Streptococcus pyogenes serotype M3 (strain ATCC BAA-595 / MGAS315)).